A 494-amino-acid polypeptide reads, in one-letter code: Cytochrome P450 2G1 (494 aa).

Position 439 (Cys-439) interacts with heme.

This sequence belongs to the cytochrome P450 family. Requires heme as cofactor. As to expression, olfactory epithelium.

The protein resides in the endoplasmic reticulum membrane. Its subcellular location is the microsome membrane. It catalyses the reaction an organic molecule + reduced [NADPH--hemoprotein reductase] + O2 = an alcohol + oxidized [NADPH--hemoprotein reductase] + H2O + H(+). Cytochromes P450 are a group of heme-thiolate monooxygenases. This isozyme seems to be implicated in olfaction. This is Cytochrome P450 2G1 (Cyp2g1) from Rattus norvegicus (Rat).